Here is a 700-residue protein sequence, read N- to C-terminus: Glycine--tRNA ligase beta subunit (700 aa).

This sequence belongs to the class-II aminoacyl-tRNA synthetase family. In terms of assembly, tetramer of two alpha and two beta subunits.

The protein localises to the cytoplasm. The catalysed reaction is tRNA(Gly) + glycine + ATP = glycyl-tRNA(Gly) + AMP + diphosphate. The polypeptide is Glycine--tRNA ligase beta subunit (Janthinobacterium sp. (strain Marseille) (Minibacterium massiliensis)).